The following is a 325-amino-acid chain: Beta-ketoacyl-[acyl-carrier-protein] synthase III (325 aa).

Active-site residues include Cys-112 and His-250. Residues 251–255 (QANIR) are ACP-binding. Residue Asn-280 is part of the active site.

This sequence belongs to the thiolase-like superfamily. FabH family. Homodimer.

The protein localises to the cytoplasm. The catalysed reaction is malonyl-[ACP] + acetyl-CoA + H(+) = 3-oxobutanoyl-[ACP] + CO2 + CoA. Its pathway is lipid metabolism; fatty acid biosynthesis. Its function is as follows. Catalyzes the condensation reaction of fatty acid synthesis by the addition to an acyl acceptor of two carbons from malonyl-ACP. Catalyzes the first condensation reaction which initiates fatty acid synthesis and may therefore play a role in governing the total rate of fatty acid production. Possesses both acetoacetyl-ACP synthase and acetyl transacylase activities. Its substrate specificity determines the biosynthesis of branched-chain and/or straight-chain of fatty acids. This chain is Beta-ketoacyl-[acyl-carrier-protein] synthase III, found in Streptococcus mutans serotype c (strain ATCC 700610 / UA159).